Here is a 252-residue protein sequence, read N- to C-terminus: Ribosomal RNA small subunit methyltransferase J (252 aa).

Residues Arg-101–Asp-102, Glu-117–Arg-118, Ser-153–Ser-154, and Asp-171 each bind S-adenosyl-L-methionine.

The protein belongs to the methyltransferase superfamily. RsmJ family.

The protein resides in the cytoplasm. The enzyme catalyses guanosine(1516) in 16S rRNA + S-adenosyl-L-methionine = N(2)-methylguanosine(1516) in 16S rRNA + S-adenosyl-L-homocysteine + H(+). In terms of biological role, specifically methylates the guanosine in position 1516 of 16S rRNA. This Salmonella dublin (strain CT_02021853) protein is Ribosomal RNA small subunit methyltransferase J.